The following is a 159-amino-acid chain: Ribosomal RNA large subunit methyltransferase H (159 aa).

S-adenosyl-L-methionine-binding positions include G108 and 127 to 132; that span reads FGPMTF.

It belongs to the RNA methyltransferase RlmH family. Homodimer.

It localises to the cytoplasm. The enzyme catalyses pseudouridine(1915) in 23S rRNA + S-adenosyl-L-methionine = N(3)-methylpseudouridine(1915) in 23S rRNA + S-adenosyl-L-homocysteine + H(+). Specifically methylates the pseudouridine at position 1915 (m3Psi1915) in 23S rRNA. The sequence is that of Ribosomal RNA large subunit methyltransferase H from Magnetococcus marinus (strain ATCC BAA-1437 / JCM 17883 / MC-1).